Here is a 181-residue protein sequence, read N- to C-terminus: MSSLTVYHESQPEQPLKLLTHAEDIASTLAEVGVRFERWEAAAPIAAGASQEEVIAAYAHEIERLKRERGYITVDVVSLDSDHPQKAELRAKFLDEHRHGEDEVRFFVAGRGLFVLHIEEHVYAVLCERNDLISVPAGTRHWFDMGEHPHFVAVRLFNNPEGWVAQFTGDDIASRFPLLED.

Fe(2+)-binding residues include histidine 97, histidine 99, glutamate 103, and histidine 141. The Ni(2+) site is built by histidine 97, histidine 99, glutamate 103, and histidine 141.

This sequence belongs to the acireductone dioxygenase (ARD) family. In terms of assembly, monomer. Fe(2+) is required as a cofactor. Ni(2+) serves as cofactor.

The enzyme catalyses 1,2-dihydroxy-5-(methylsulfanyl)pent-1-en-3-one + O2 = 3-(methylsulfanyl)propanoate + CO + formate + 2 H(+). It carries out the reaction 1,2-dihydroxy-5-(methylsulfanyl)pent-1-en-3-one + O2 = 4-methylsulfanyl-2-oxobutanoate + formate + 2 H(+). The protein operates within amino-acid biosynthesis; L-methionine biosynthesis via salvage pathway; L-methionine from S-methyl-5-thio-alpha-D-ribose 1-phosphate: step 5/6. Catalyzes 2 different reactions between oxygen and the acireductone 1,2-dihydroxy-3-keto-5-methylthiopentene (DHK-MTPene) depending upon the metal bound in the active site. Fe-containing acireductone dioxygenase (Fe-ARD) produces formate and 2-keto-4-methylthiobutyrate (KMTB), the alpha-ketoacid precursor of methionine in the methionine recycle pathway. Ni-containing acireductone dioxygenase (Ni-ARD) produces methylthiopropionate, carbon monoxide and formate, and does not lie on the methionine recycle pathway. The sequence is that of Acireductone dioxygenase from Pseudomonas paraeruginosa (strain DSM 24068 / PA7) (Pseudomonas aeruginosa (strain PA7)).